Reading from the N-terminus, the 89-residue chain is UPF0223 protein BCE_4008 (89 aa).

The protein belongs to the UPF0223 family.

The chain is UPF0223 protein BCE_4008 from Bacillus cereus (strain ATCC 10987 / NRS 248).